Consider the following 172-residue polypeptide: Peptide deformylase (172 aa).

Fe cation-binding residues include Cys-94 and His-136. Glu-137 is a catalytic residue. His-140 is a binding site for Fe cation.

Belongs to the polypeptide deformylase family. Fe(2+) serves as cofactor.

It catalyses the reaction N-terminal N-formyl-L-methionyl-[peptide] + H2O = N-terminal L-methionyl-[peptide] + formate. Its function is as follows. Removes the formyl group from the N-terminal Met of newly synthesized proteins. Requires at least a dipeptide for an efficient rate of reaction. N-terminal L-methionine is a prerequisite for activity but the enzyme has broad specificity at other positions. This is Peptide deformylase from Pelagibacter ubique (strain HTCC1062).